The following is a 59-amino-acid chain: Protein QUA-QUINE STARCH (59 aa).

In terms of tissue distribution, expressed in hypocotyls, leaves, vasculature, hydathodes, trichomes, pedicels, sepals, filaments, mature pollen, stigma papillae, styles, siliques, root and shoot tips, but not in shoot meristem, petals or root epidermis.

Its subcellular location is the cytoplasm. Functionally, involved in regulating carbon and nitrogen allocation to starch and protein. The chain is Protein QUA-QUINE STARCH from Arabidopsis thaliana (Mouse-ear cress).